We begin with the raw amino-acid sequence, 355 residues long: Uroporphyrinogen decarboxylase (355 aa).

Substrate contacts are provided by residues 27–31 (RQAGR), Asp-77, Tyr-154, Thr-209, and His-328.

The protein belongs to the uroporphyrinogen decarboxylase family. In terms of assembly, homodimer.

It localises to the cytoplasm. It carries out the reaction uroporphyrinogen III + 4 H(+) = coproporphyrinogen III + 4 CO2. Its pathway is porphyrin-containing compound metabolism; protoporphyrin-IX biosynthesis; coproporphyrinogen-III from 5-aminolevulinate: step 4/4. Its function is as follows. Catalyzes the decarboxylation of four acetate groups of uroporphyrinogen-III to yield coproporphyrinogen-III. This is Uroporphyrinogen decarboxylase from Dechloromonas aromatica (strain RCB).